We begin with the raw amino-acid sequence, 592 residues long: Membrane protein insertase YidC (592 aa).

A helical transmembrane segment spans residues 7 to 27 (NYFVAIALSVLILVAWQYFYV). The disordered stretch occupies residues 38-74 (AEKAQQTQQVQPQQGGQQPAPGQALPGGAVPGESRDQ). The segment covering 41–69 (AQQTQQVQPQQGGQQPAPGQALPGGAVPG) has biased composition (low complexity). The next 4 helical transmembrane spans lie at 367 to 387 (LFGN…LIFF), 441 to 461 (WPIL…YITI), 486 to 506 (LFGL…WPII), and 530 to 550 (FTWM…GLVI).

The protein belongs to the OXA1/ALB3/YidC family. Type 1 subfamily. In terms of assembly, interacts with the Sec translocase complex via SecD. Specifically interacts with transmembrane segments of nascent integral membrane proteins during membrane integration.

Its subcellular location is the cell inner membrane. Required for the insertion and/or proper folding and/or complex formation of integral membrane proteins into the membrane. Involved in integration of membrane proteins that insert both dependently and independently of the Sec translocase complex, as well as at least some lipoproteins. Aids folding of multispanning membrane proteins. This chain is Membrane protein insertase YidC, found in Sinorhizobium fredii (strain NBRC 101917 / NGR234).